Consider the following 813-residue polypeptide: Phosphate transporter PHO1 homolog 3 (813 aa).

Positions M1–K359 constitute an SPX domain. Residues M1–T411 lie on the Cytoplasmic side of the membrane. The segment at E214–S266 is disordered. A compositionally biased stretch (acidic residues) spans M230–N241. Residues F412–I432 form a helical membrane-spanning segment. Over R433–M450 the chain is Extracellular. Residues F451 to I471 form a helical membrane-spanning segment. Residues Y472–R496 are Cytoplasmic-facing. A helical membrane pass occupies residues Q497–L517. The Extracellular segment spans residues D518–E533. A helical transmembrane segment spans residues I534–F554. At Y555 to R684 the chain is on the cytoplasmic side. Positions K618–N813 constitute an EXS domain. The chain crosses the membrane as a helical span at residues V685–H705. Residues D706 to K729 lie on the Extracellular side of the membrane. A helical transmembrane segment spans residues V730–L750. The Cytoplasmic segment spans residues D751–N813.

The protein belongs to the SYG1 (TC 2.A.94) family. Expressed in vascular cylinder of roots, leaves and filaments. Expressed in receptacle and stigma apex.

It is found in the cell membrane. In terms of biological role, may transport inorganic phosphate (Pi). This chain is Phosphate transporter PHO1 homolog 3 (PHO1;H3), found in Arabidopsis thaliana (Mouse-ear cress).